The sequence spans 420 residues: Methionine aminopeptidase 2 (420 aa).

The segment at 1–48 is disordered; sequence MSDAIAKDAVNTSSEKEPVSATPELKTSGSPDAAVSSGDKKKKKKKKK. His172 contacts substrate. The a divalent metal cation site is built by Asp192, Asp203, and His272. Position 280 (His280) interacts with substrate. The a divalent metal cation site is built by Glu305 and Glu401.

It belongs to the peptidase M24A family. Methionine aminopeptidase eukaryotic type 2 subfamily. It depends on Co(2+) as a cofactor. The cofactor is Zn(2+). Mn(2+) serves as cofactor. Fe(2+) is required as a cofactor.

Its subcellular location is the cytoplasm. It carries out the reaction Release of N-terminal amino acids, preferentially methionine, from peptides and arylamides.. In terms of biological role, cotranslationally removes the N-terminal methionine from nascent proteins. The N-terminal methionine is often cleaved when the second residue in the primary sequence is small and uncharged (Met-Ala-, Cys, Gly, Pro, Ser, Thr, or Val). The polypeptide is Methionine aminopeptidase 2 (Lachancea thermotolerans (strain ATCC 56472 / CBS 6340 / NRRL Y-8284) (Yeast)).